A 391-amino-acid chain; its full sequence is mRNA-capping enzyme subunit alpha (391 aa).

The N6-GMP-lysine intermediate role is filled by K63. The disordered stretch occupies residues 363–391 (KERNRRPRDEDRKRVGGDDHDHGAKRARQ).

The protein belongs to the eukaryotic GTase family. Heterodimer. The mRNA-capping enzyme is composed of two separate chains alpha and beta, respectively a mRNA guanylyltransferase and an mRNA 5'-triphosphate monophosphatase.

The protein resides in the nucleus. The catalysed reaction is a 5'-end diphospho-ribonucleoside in mRNA + GTP + H(+) = a 5'-end (5'-triphosphoguanosine)-ribonucleoside in mRNA + diphosphate. Second step of mRNA capping. Transfer of the GMP moiety of GTP to the 5'-end of RNA via an enzyme-GMP covalent reaction intermediate. This is mRNA-capping enzyme subunit alpha (CEG1) from Yarrowia lipolytica (strain CLIB 122 / E 150) (Yeast).